Consider the following 382-residue polypeptide: Gas vesicle protein C1 (382 aa).

Residues Met1–Ala18 are compositionally biased toward basic and acidic residues. The segment at Met1–Gln21 is disordered. Repeat copies occupy residues Gln22–Thr60, Asp61–Gln92, Asp93–His130, Gly131–Gln168, Asp169–Ala200, Asp201–Glu240, and Asp241–Asp284. Residues Gln22–Asp284 are 7 X approximate tandem repeats. Residues Gly260 to Glu302 show a composition bias toward acidic residues. Residues Gly260–Thr382 are disordered. Over residues Val303–Asp316 the composition is skewed to low complexity. Acidic residues predominate over residues Thr317–Glu336. The span at Glu365–Thr382 shows a compositional bias: basic and acidic residues.

The protein belongs to the halobacterial gas vesicle GvpC family. As to quaternary structure, forms homodimers, interacts with GvpF1, GvpH1, GvpI1, GvpL1, GvpN1 and GvpO1 via its C-terminus (residues 329-382).

It localises to the gas vesicle. The protein localises to the cytoplasm. Its function is as follows. Confers stability, involved in shaping gas vesicles. Gas vesicles are hollow, gas filled proteinaceous nanostructures found in several microbial planktonic microorganisms. They allow positioning of halobacteria at the optimal depth for growth in the poorly aerated, shallow brine pools of their habitat. Expression of a 9.5 kb p-vac DNA fragment containing 2 divergently transcribed regions (gvpD-gvpE-gvpF-gvpG-gvpH-gvpI-gvpJ-gvpK-gvpL-gvpM and gvpA-gvpC-gvpN-gvpO) allows H.volcanii to produce gas vesicles. A similar region restores gas vesicle production in H.halobium without the p-vac locus, but it still has the c-vac locus. The polypeptide is Gas vesicle protein C1 (gvpC1) (Halobacterium salinarum (strain ATCC 700922 / JCM 11081 / NRC-1) (Halobacterium halobium)).